Reading from the N-terminus, the 209-residue chain is DNA ADP-ribosyl transferase (209 aa).

Positions 9-209 (TPIYHITHID…RVCIRKDWYY (201 aa)) constitute a DarT domain. Residues 13–15 (HIT), Gly-22, and Leu-30 each bind NAD(+). Residues 35–53 (SPPKQRSIAYAHIQERRNR) form an NAD(+)-binding element region. The DNA-binding element occupies 44–50 (YAHIQER). An NAD(+)-binding site is contributed by Arg-51. Residue Arg-51 is the Proton acceptor of the active site. DNA-binding regions lie at residues 75–80 (RSPMLY), 145–148 (SYWA), and 154–158 (REKKQ). Residues 116 to 160 (TDRHGVLSHARFFRQLEELAQLDWEAIQASYWADPPELREKKQAE) are ADP-ribosylating turn-turn loop. The active site involves Glu-160.

It belongs to the DarT ADP-ribosyltransferase family. Interacts with cognate antitoxin DarG (via C-terminus); this heterodimeric complex neutralizes the toxic effect of DarT by preventing ssDNA binding to DarT and consequently inactivating the toxin by direct protein-protein interactions.

It carries out the reaction a thymidine in DNA + NAD(+) = an N-(ADP-alpha-D-ribosyl)-thymidine in DNA + nicotinamide + H(+). Its function is as follows. Toxic component of the hybrid type II/IV toxin-antitoxin (TA) system DarTG, which plays a crucial role in controlling bacterial growth and bacteriophage infection. In case of phage infection, DarT toxin ADP-ribosylates DNA, which inhibits both viral DNA and RNA synthesis and leads to abortive infection. ADP-ribosylates ssDNA on the second thymidine of the consensus sequence 5'-TNTC-3'; the protein does not auto-modify. Arg-51 is highly flexible, allowing it to assume multiple positions in the crystal structures. Its toxic effect is neutralized by cognate antitoxin DarG. In Thermus sp. (strain 2.9), this protein is DNA ADP-ribosyl transferase.